The following is a 160-amino-acid chain: F-box protein At1g15015 (160 aa).

The 44-residue stretch at 1–44 (MDVTLPHHVVEDILERLPVKTLRKFKCVCSTWRSTIDSQRFKDR) folds into the F-box domain.

The chain is F-box protein At1g15015 from Arabidopsis thaliana (Mouse-ear cress).